Consider the following 514-residue polypeptide: tRNA-2-methylthio-N(6)-dimethylallyladenosine synthase (514 aa).

The segment at 1-21 is disordered; sequence MNEEQRKASSVDVLAERDKKA. The 119-residue stretch at 68-186 folds into the MTTase N-terminal domain; sequence RTFLIKTYGC…LPEILEEAYL (119 aa). Positions 77, 113, 147, 223, 227, and 230 each coordinate [4Fe-4S] cluster. The Radical SAM core domain maps to 209–440; sequence REGNIKAWVN…KKVGHYSQIA (232 aa). The TRAM domain maps to 442–505; sequence SKYEGQTVTV…QYSLNGSFVK (64 aa).

The protein belongs to the methylthiotransferase family. MiaB subfamily. In terms of assembly, monomer. Requires [4Fe-4S] cluster as cofactor.

The protein localises to the cytoplasm. It carries out the reaction N(6)-dimethylallyladenosine(37) in tRNA + (sulfur carrier)-SH + AH2 + 2 S-adenosyl-L-methionine = 2-methylsulfanyl-N(6)-dimethylallyladenosine(37) in tRNA + (sulfur carrier)-H + 5'-deoxyadenosine + L-methionine + A + S-adenosyl-L-homocysteine + 2 H(+). Functionally, catalyzes the methylthiolation of N6-(dimethylallyl)adenosine (i(6)A), leading to the formation of 2-methylthio-N6-(dimethylallyl)adenosine (ms(2)i(6)A) at position 37 in tRNAs that read codons beginning with uridine. This chain is tRNA-2-methylthio-N(6)-dimethylallyladenosine synthase, found in Staphylococcus aureus (strain N315).